Consider the following 101-residue polypeptide: Small ribosomal subunit protein uS14 (101 aa).

The protein belongs to the universal ribosomal protein uS14 family. As to quaternary structure, part of the 30S ribosomal subunit. Contacts proteins S3 and S10.

Its function is as follows. Binds 16S rRNA, required for the assembly of 30S particles and may also be responsible for determining the conformation of the 16S rRNA at the A site. This is Small ribosomal subunit protein uS14 from Aliivibrio fischeri (strain ATCC 700601 / ES114) (Vibrio fischeri).